Consider the following 141-residue polypeptide: MTEMDRISISLPSKLLREFDEIIAERGYASRSEAIRDAIRDYIIKHKWIHSLEGERAGSISVIYNHHASDVMEKITEIQHNYTDIIVATLHLHLDHDHCLETILVRGDAKRIRELTDRLTALKGVKQVKLSVMVPGGQIPE.

Ni(2+) is bound by residues histidine 80, histidine 91, histidine 93, and cysteine 99.

It belongs to the transcriptional regulatory CopG/NikR family. As to quaternary structure, homotetramer. Requires Ni(2+) as cofactor.

In terms of biological role, transcriptional regulator. This is Putative nickel-responsive regulator from Methanocaldococcus jannaschii (strain ATCC 43067 / DSM 2661 / JAL-1 / JCM 10045 / NBRC 100440) (Methanococcus jannaschii).